Consider the following 707-residue polypeptide: Tubulin polyglutamylase ttll-11 (707 aa).

The 365-residue stretch at 124 to 488 (RFTIDTSRAK…PLVRDTLLLV (365 aa)) folds into the TTL domain. ATP is bound by residues 279–282 (QEYV), lysine 293, and aspartate 295. Residues 675 to 707 (RNRSGTNGRKQNFTDDNNNPNSFAHLPKINERL) are disordered. Positions 677-696 (RSGTNGRKQNFTDDNNNPNS) are enriched in polar residues.

Belongs to the tubulin--tyrosine ligase family. In terms of tissue distribution, expressed in amphid sensory neurons. Weakly expressed in body wall muscles. Isoform a: Specifically expressed in ciliated sensory neurons in the head, including the IL1s, OLQ, head CEP, and amphid neurons. In the male tail, expressed in HOA, RnA, and phasmid neurons. Isoform b: Specifically expressed in male and hermaphrodite IL2 ciliated sensory neurons, and in male-specific CEM, HOB and RnB ciliated sensory neurons.

The protein localises to the cell projection. It is found in the axon. Its subcellular location is the perikaryon. The protein resides in the dendrite. It localises to the cilium. The protein localises to the extracellular vesicle. It catalyses the reaction L-glutamyl-[protein] + L-glutamate + ATP = gamma-L-glutamyl-L-glutamyl-[protein] + ADP + phosphate + H(+). Its function is as follows. Polyglutamylase which preferentially modifies tubulin. Involved in the side-chain initiation step of the polyglutamylation reaction. By controlling tubulin glutamylation, regulates ciliary specialization and motor-based transport. Promotes the formation of A and B tubule singlets by splaying microtubule doublets in cilia. Together with ttll-4 and 5, required for male mating. Specifically promotes tubulin glutamylation in a subset of ciliated neurons including amphid, phasmid, CEP and RnA neurons. Functionally, specifically promotes tubulin glutamylation in male ciliated CEM, HOB and RnB neurons that release bioactive extracellular vesicles. Regulates the localization of TRP channel pdk-2 in male CEM, HOB and RnB neurons. Regulates the environmental release of bioactive extracellular vesicles in cilia. This Caenorhabditis elegans protein is Tubulin polyglutamylase ttll-11.